Consider the following 642-residue polypeptide: 3D-(3,5/4)-trihydroxycyclohexane-1,2-dione hydrolase (642 aa).

A thiamine diphosphate-binding site is contributed by Glu71. The thiamine pyrophosphate binding stretch occupies residues 446-526 (SLPGDVQRIW…INILVFDNSG (81 aa)). Residues Asp497 and Asn524 each coordinate Mg(2+).

Belongs to the TPP enzyme family. Requires Mg(2+) as cofactor. It depends on thiamine diphosphate as a cofactor.

The catalysed reaction is 3D-3,5/4-trihydroxycyclohexane-1,2-dione + H2O = 5-deoxy-D-glucuronate + H(+). It functions in the pathway polyol metabolism; myo-inositol degradation into acetyl-CoA; acetyl-CoA from myo-inositol: step 3/7. Functionally, involved in the cleavage of the C1-C2 bond of 3D-(3,5/4)-trihydroxycyclohexane-1,2-dione (THcHDO) to yield 5-deoxy-glucuronate (5DG). The chain is 3D-(3,5/4)-trihydroxycyclohexane-1,2-dione hydrolase from Lacticaseibacillus casei (Lactobacillus casei).